Here is a 301-residue protein sequence, read N- to C-terminus: Sulfate adenylyltransferase subunit 2 (301 aa).

It belongs to the PAPS reductase family. CysD subfamily. As to quaternary structure, heterodimer composed of CysD, the smaller subunit, and CysN.

It catalyses the reaction sulfate + ATP + H(+) = adenosine 5'-phosphosulfate + diphosphate. The protein operates within sulfur metabolism; hydrogen sulfide biosynthesis; sulfite from sulfate: step 1/3. In terms of biological role, with CysN forms the ATP sulfurylase (ATPS) that catalyzes the adenylation of sulfate producing adenosine 5'-phosphosulfate (APS) and diphosphate, the first enzymatic step in sulfur assimilation pathway. APS synthesis involves the formation of a high-energy phosphoric-sulfuric acid anhydride bond driven by GTP hydrolysis by CysN coupled to ATP hydrolysis by CysD. The polypeptide is Sulfate adenylyltransferase subunit 2 (Geobacter metallireducens (strain ATCC 53774 / DSM 7210 / GS-15)).